A 370-amino-acid chain; its full sequence is MSLHQFLLEPISCHAWNKDLTQIAISPNNHEVHIYKKSGDQWVKGHELKEHNGHITGIDWAPKSDRIVTCGADRNAYVWSQKDGVWKPTLVILRINRAATFVKWSPLENKFAVGSGARLISVCYFESENDWWVSKHIKKPIRSTVLSLDWHPNNVLLAAGSCDFKTRVFSAYIKEVDEKPASTPWGSKMPFGQMMAEFGGVSSGGWVHSVSFSASGNKLAWVSHDSTVSVADASKNMSVSQLKTEFLPLLSVIFVSENSLIAAGHDCCPMLFTYDEHGSLTFVSKLDIPKQSTQRNISAMERFRNMDKRATTEDRNTTLETLHQNSITQVSIYDGDKTECRKFCTTGIDGAMTIWDFKTLESYIQGLKIM.

WD repeat units lie at residues 6–45, 50–89, 140–179, 202–241, 244–284, and 322–365; these read FLLE…WVKG, EHNG…WKPT, PIRS…VDEK, SSGG…SVSQ, TEFL…TFVS, and LHQN…SYIQ.

This sequence belongs to the WD repeat ARPC1 family. Component of the Arp2/3 complex.

The protein resides in the cytoplasm. It localises to the cytoskeleton. Its subcellular location is the nucleus. In terms of biological role, probably functions as a component of the Arp2/3 complex which is involved in regulation of actin polymerization and together with an activating nucleation-promoting factor (NPF) mediates the formation of branched actin networks. In addition to its role in the cytoplasmic cytoskeleton, the Arp2/3 complex also promotes actin polymerization in the nucleus, thereby regulating gene transcription and repair of damaged DNA. The polypeptide is Actin-related protein 2/3 complex subunit 1A-A (arpc1a-a) (Xenopus laevis (African clawed frog)).